The primary structure comprises 331 residues: Pectate lyase B (331 aa).

Residues 1-25 form the signal peptide; that stretch reads MKFTGSPLLWPSWLPLPAPPPPLPS. Residue asparagine 99 is glycosylated (N-linked (GlcNAc...) asparagine). Ca(2+) is bound by residues aspartate 139, aspartate 169, and aspartate 173. The active site involves arginine 226.

It belongs to the polysaccharide lyase 1 family. The cofactor is Ca(2+).

It is found in the secreted. It carries out the reaction Eliminative cleavage of (1-&gt;4)-alpha-D-galacturonan to give oligosaccharides with 4-deoxy-alpha-D-galact-4-enuronosyl groups at their non-reducing ends.. It participates in glycan metabolism; pectin degradation; 2-dehydro-3-deoxy-D-gluconate from pectin: step 2/5. Functionally, acts as a virulence factor active in plant tissue maceration. This is Pectate lyase B (PLB) from Colletotrichum gloeosporioides (Anthracnose fungus).